The following is a 1059-amino-acid chain: Tyrosine-protein kinase-like otk (1059 aa).

The N-terminal stretch at 1–23 (MDMLMMWSICLFVCIFMAPFSCG) is a signal peptide. At 24-597 (SGSSSRFIQV…GDGGFLATRA (574 aa)) the chain is on the extracellular side. Ig-like C2-type domains lie at 28–112 (SRFI…REAS), 113–202 (PTAK…RVMS), 258–377 (PEGL…LAIN), 380–475 (PGIL…VSIN), and 480–570 (PKFS…AVLT). N-linked (GlcNAc...) asparagine glycosylation occurs at N42. Cystine bridges form between C49-C99, C141-C191, C283-C366, and C411-C459. 7 N-linked (GlcNAc...) asparagine glycosylation sites follow: N348, N429, N441, N456, N469, N524, and N536. C502 and C554 are joined by a disulfide. A helical membrane pass occupies residues 598–618 (VLITMTVALAYIVLVVGLMLW). Topologically, residues 619–1059 (CRYRRQARKA…ALSKAMQNSE (441 aa)) are cytoplasmic. Residues 639-695 (GGEQAGGEGSTSGNPKASEQEPCLGKQQRNGRNGKSKSNGDPQKSDDTACSQQSRAS) are disordered. Polar residues predominate over residues 665-693 (QQRNGRNGKSKSNGDPQKSDDTACSQQSR). At S698 the chain carries Phosphoserine. One can recognise a Protein kinase; inactive domain in the interval 712-1055 (LSELIQIGRG…QLGAALSKAM (344 aa)). The segment at 739 to 781 (AQANDKDSDNDKQHSNSENGSGGSSGSTTLSTLNEKRRSKTSM) is disordered. Basic and acidic residues predominate over residues 742–753 (NDKDSDNDKQHS).

It belongs to the protein kinase superfamily. Tyr protein kinase family. Insulin receptor subfamily. Interacts with plexA; component of a receptor complex that mediates the repulsive signaling in response to Semaphorin ligands.

Its subcellular location is the cell membrane. Acts as a calcium-dependent, homophilic cell adhesion molecule that regulates neural recognition during the development of the nervous system. Component of the repulsive Plexin signaling response to regulate motor axon guidance at the embryonic stage. Also component of a receptor complex that is required in the adult visual system to innervate the lamina layer; specific targeting of R1-R6 axons. The chain is Tyrosine-protein kinase-like otk from Drosophila willistoni (Fruit fly).